A 433-amino-acid chain; its full sequence is MAGQTIIVSGLNPAAILQSTIGGGASPTAAAAAENGTRKVIPLSRDALQDFMLSIITQKLQDEKQPFYVLDLGEVVSLMDQWKSALPNIRPFYAVKCNPEPSFLSILSAMGSNFDCASRAEIEYVLSLGISPDRIVFANPCKPESDIIFAAKVGVNLTTYDSEDEVYKIRKHHPKSELLLRIKPMLDGNARCPMGPKYGALPEEVDPLLRAAQAARLTVSGVSFHIGSGDADSNAYLGAIAAAKEVFETAAKLGMSKMTVLDVGGGFTSGHQFTTAAVAVKSALKQHFDDEPELTIIAEPGRFFAETAFTLATTIIGKRVRGELREYWINDGLYGSMNCVLYDHATVNATPLAVLSNRSNVTCGGSKTFPTTVFGPTCDALDTVLRDYQLPELQVNDWLVFPNMGAYTKAAGSNFNGFNTSAIVTHLAYSYPS.

At Lys96 the chain carries N6-(pyridoxal phosphate)lysine. Pyridoxal 5'-phosphate is bound by residues Ser228, Gly266, and 299 to 302 (EPGR). 342-343 (YD) serves as a coordination point for substrate. Cys378 acts as the Proton donor; shared with dimeric partner in catalysis. Position 379 (Asp379) interacts with substrate. Residue Tyr407 participates in pyridoxal 5'-phosphate binding.

Belongs to the Orn/Lys/Arg decarboxylase class-II family. In terms of assembly, homodimer. Only the dimer is catalytically active, as the active sites are constructed of residues from both monomers. Pyridoxal 5'-phosphate serves as cofactor.

Its subcellular location is the plastid. It is found in the chloroplast. It carries out the reaction L-ornithine + H(+) = putrescine + CO2. The protein operates within alkaloid biosynthesis; nicotine biosynthesis. Its pathway is amine and polyamine biosynthesis; putrescine biosynthesis via L-ornithine pathway; putrescine from L-ornithine: step 1/1. In terms of biological role, involved in the biosynthesis of pyridine alkaloid natural products, leading mainly to the production of anabasine, anatabine, nicotine and nornicotine, effective deterrents against herbivores with antiparasitic and pesticide properties (neurotoxins); nornicotine serves as the precursor in the synthesis of the carcinogen compound N'-nitrosonornicotine (NNN). Catalyzes the first and rate-limiting step of polyamine biosynthesis that converts ornithine into putrescine, which is the precursor for the polyamines, spermidine and spermine. Polyamines are essential for cell proliferation and are implicated in cellular processes, ranging from DNA replication to apoptosis. The chain is Ornithine decarboxylase 1B, chloroplastic from Nicotiana tabacum (Common tobacco).